Reading from the N-terminus, the 284-residue chain is RNase adapter protein RapZ (284 aa).

8–15 contributes to the ATP binding site; sequence GRSGSGKS. 56-59 contacts GTP; that stretch reads DVRN. Positions 266–284 are RNA-binding; the sequence is RSRGKNVQSRHRTLEKRKS.

The protein belongs to the RapZ-like family. RapZ subfamily. In terms of assembly, homotrimer.

Its function is as follows. Modulates the synthesis of GlmS, by affecting the processing and stability of the regulatory small RNA GlmZ. When glucosamine-6-phosphate (GlcN6P) concentrations are high in the cell, RapZ binds GlmZ and targets it to cleavage by RNase E. Consequently, GlmZ is inactivated and unable to activate GlmS synthesis. Under low GlcN6P concentrations, RapZ is sequestered and inactivated by an other regulatory small RNA, GlmY, preventing GlmZ degradation and leading to synthesis of GlmS. This chain is RNase adapter protein RapZ, found in Cronobacter sakazakii (strain ATCC BAA-894) (Enterobacter sakazakii).